Consider the following 254-residue polypeptide: Aspartate/glutamate leucyltransferase (254 aa).

It belongs to the R-transferase family. Bpt subfamily.

Its subcellular location is the cytoplasm. The enzyme catalyses N-terminal L-glutamyl-[protein] + L-leucyl-tRNA(Leu) = N-terminal L-leucyl-L-glutamyl-[protein] + tRNA(Leu) + H(+). It catalyses the reaction N-terminal L-aspartyl-[protein] + L-leucyl-tRNA(Leu) = N-terminal L-leucyl-L-aspartyl-[protein] + tRNA(Leu) + H(+). Its function is as follows. Functions in the N-end rule pathway of protein degradation where it conjugates Leu from its aminoacyl-tRNA to the N-termini of proteins containing an N-terminal aspartate or glutamate. This chain is Aspartate/glutamate leucyltransferase, found in Xylella fastidiosa (strain M23).